We begin with the raw amino-acid sequence, 151 residues long: Small ribosomal subunit protein uS19 (151 aa).

Belongs to the universal ribosomal protein uS19 family.

Its function is as follows. Protein S19 forms a complex with S13 that binds strongly to the 16S ribosomal RNA. The polypeptide is Small ribosomal subunit protein uS19 (rps19) (Thermoplasma acidophilum (strain ATCC 25905 / DSM 1728 / JCM 9062 / NBRC 15155 / AMRC-C165)).